A 447-amino-acid polypeptide reads, in one-letter code: Membrane metalloprotease ARASP, chloroplastic (447 aa).

Residues 1–73 (MLLNISSSPI…YPDGERFDFR (73 aa)) constitute a chloroplast transit peptide. Position 102 (His102) interacts with Zn(2+). Residue Glu103 is part of the active site. Zn(2+) is bound at residue His106. The helical transmembrane segment at 177-197 (SIVVSAGIIANVIFAYAIIFV) threads the bilayer. The PDZ domain maps to 202–244 (VGLPVQEAFPGVLVPEVKTFSAASRDGLLSGDVILAVDGTELS). 2 helical membrane-spanning segments follow: residues 379-399 (LAVINLLPLPALDGGTLALIL) and 413-433 (VEQGIMSSGIMLVIFLGLFLI).

This sequence belongs to the peptidase M50A family. It depends on Zn(2+) as a cofactor. In terms of tissue distribution, expressed in green seedlings and cotyledons. Low levels of expression in roots, siliques and seeds.

The protein localises to the plastid. The protein resides in the chloroplast inner membrane. Its function is as follows. Metalloprotease essential for chloroplast and plant development. May be involved in regulated intramembrane proteolysis (RIP). This chain is Membrane metalloprotease ARASP, chloroplastic, found in Arabidopsis thaliana (Mouse-ear cress).